A 411-amino-acid chain; its full sequence is ACT domain-containing protein ACR9 (411 aa).

ACT domains are found at residues 22–105, 111–194, and 243–322; these read VVTV…NVSK, LLKF…LAGP, and LLQI…VIIV.

May bind amino acids. The protein is ACT domain-containing protein ACR9 of Arabidopsis thaliana (Mouse-ear cress).